The sequence spans 334 residues: Holliday junction branch migration complex subunit RuvB (334 aa).

Residues alanine 4 to tyrosine 184 are large ATPase domain (RuvB-L). Residues arginine 24, glycine 65, lysine 68, threonine 69, threonine 70, glutamate 131–tyrosine 133, arginine 174, tyrosine 184, and arginine 221 contribute to the ATP site. Position 69 (threonine 69) interacts with Mg(2+). The tract at residues asparagine 185–aspartate 255 is small ATPAse domain (RuvB-S). A head domain (RuvB-H) region spans residues glycine 258–glutamate 334. Residues arginine 294, arginine 313, and arginine 318 each contribute to the DNA site.

Belongs to the RuvB family. In terms of assembly, homohexamer. Forms an RuvA(8)-RuvB(12)-Holliday junction (HJ) complex. HJ DNA is sandwiched between 2 RuvA tetramers; dsDNA enters through RuvA and exits via RuvB. An RuvB hexamer assembles on each DNA strand where it exits the tetramer. Each RuvB hexamer is contacted by two RuvA subunits (via domain III) on 2 adjacent RuvB subunits; this complex drives branch migration. In the full resolvosome a probable DNA-RuvA(4)-RuvB(12)-RuvC(2) complex forms which resolves the HJ.

It localises to the cytoplasm. The enzyme catalyses ATP + H2O = ADP + phosphate + H(+). Functionally, the RuvA-RuvB-RuvC complex processes Holliday junction (HJ) DNA during genetic recombination and DNA repair, while the RuvA-RuvB complex plays an important role in the rescue of blocked DNA replication forks via replication fork reversal (RFR). RuvA specifically binds to HJ cruciform DNA, conferring on it an open structure. The RuvB hexamer acts as an ATP-dependent pump, pulling dsDNA into and through the RuvAB complex. RuvB forms 2 homohexamers on either side of HJ DNA bound by 1 or 2 RuvA tetramers; 4 subunits per hexamer contact DNA at a time. Coordinated motions by a converter formed by DNA-disengaged RuvB subunits stimulates ATP hydrolysis and nucleotide exchange. Immobilization of the converter enables RuvB to convert the ATP-contained energy into a lever motion, pulling 2 nucleotides of DNA out of the RuvA tetramer per ATP hydrolyzed, thus driving DNA branch migration. The RuvB motors rotate together with the DNA substrate, which together with the progressing nucleotide cycle form the mechanistic basis for DNA recombination by continuous HJ branch migration. Branch migration allows RuvC to scan DNA until it finds its consensus sequence, where it cleaves and resolves cruciform DNA. This chain is Holliday junction branch migration complex subunit RuvB, found in Shewanella sp. (strain ANA-3).